We begin with the raw amino-acid sequence, 105 residues long: Large ribosomal subunit protein bL21 (105 aa).

It belongs to the bacterial ribosomal protein bL21 family. As to quaternary structure, part of the 50S ribosomal subunit. Contacts protein L20.

Its function is as follows. This protein binds to 23S rRNA in the presence of protein L20. The protein is Large ribosomal subunit protein bL21 of Treponema pallidum (strain Nichols).